We begin with the raw amino-acid sequence, 811 residues long: MLMTATGSPFLTAETIIVAADRAARAIPPLWPLASSVAVNPFIGQAGDTLPTAAARLRRAAGIALTMPRSWYAERLRSGEIAEGDLQAAFDAAPAELRPKTLAALKQAAHAQGTRPPALPTVAELARDLDSIDWPGIVNDRIGHWASGYFDQGQALWATAQAQRAYAAWRTVATHDLTPEIAGLAGFAQNVADAPADAEAALVRCVTRLGLSGAALESYFHRLLMTLGGWGQIARYRLWQAELTGNTDASVVDLLAIRLTWEAALLRQYGAALEPQWQAAIAAYARPVAATLEDGVDAILQEAAERAAQRRLHSLLSETPSALAAPGRPALQMAFCIDVRSEVFRRALESLDPGIRTLGFAGFFGLGIGHRRFGSDVVEARLPVLLRPGVFTCSGEATPAIDKADLTARITARAKRAWGRFKLAAISSFAFVEAAGPIYVGRLLRDGLALPRPSAPNDPAPRPADDLGFDTRLGMAANVLRAMSLTEGFARLVLLAGHGASVVNNPHASALHCGACGGYSGEVNARLLAALLNDRDVRAGLASQGIRIPDDTVFLGALHDTTTDEVTVYAADHPSVAHAGDLERARRWLTSAGVLARGERALRLPRAARSQDIPHRARDWAELRPEWALAGCQAFVAAPRERTAGRDLEGRAFLHDYDWRRDKGFGVLELILTAPVVVASWISLQYYGSVVAPDVFGAGNKLLHNVTGGIGVVEGNGGLLRSGLPWQSVHDGEQLAHEPLRLSVLIEAPREAIAGILERHPGVRTLFDNRWLHLFALDDEGHMAWRYTGDLRWENCSRDAASGRIPLRELA.

Zn(2+)-binding residues include cysteine 336, aspartate 338, histidine 498, and cysteine 513.

Belongs to the inorganic carbon transporter (TC 9.A.2) DabA family. In terms of assembly, forms a complex with DabB. Zn(2+) serves as cofactor.

It localises to the cell inner membrane. Functionally, part of an energy-coupled inorganic carbon pump. This chain is Probable inorganic carbon transporter subunit DabA, found in Rhodospirillum centenum (strain ATCC 51521 / SW).